Here is a 424-residue protein sequence, read N- to C-terminus: ATP-sensitive inward rectifier potassium channel 8 (424 aa).

Over 1-69 (MLARKSIIPE…IFTTLVDLKW (69 aa)) the chain is Cytoplasmic. Serine 6 is modified (phosphoserine). The helical transmembrane segment at 70–94 (RHTLVIFTMSFLCSWLLFAIMWWLV) threads the bilayer. The Extracellular segment spans residues 95–126 (AFAHGDIYAYMEKGTMEKSGLESAVCVTNVRS). An intramembrane region (helical; Pore-forming) is located at residues 127 to 138 (FTSAFLFSIEVQ). An intramembrane region (pore-forming) is located at residues 139-145 (VTIGFGG). Residues 140-145 (TIGFGG) carry the Selectivity filter motif. Topologically, residues 146–154 (RMMTEECPL) are extracellular. A helical transmembrane segment spans residues 155–176 (AITVLILQNIVGLIINAVMLGC). Residues 177–424 (IFMKTAQAHR…PEGNQCPSES (248 aa)) are Cytoplasmic-facing. The interval 373–409 (ELSHQNSLRKRNSMRRNNSMRRNNSIRRNNSSLMVPK) is disordered. The span at 387 to 404 (RRNNSMRRNNSIRRNNSS) shows a compositional bias: low complexity.

The protein belongs to the inward rectifier-type potassium channel (TC 1.A.2.1) family. KCNJ8 subfamily. As to quaternary structure, interacts with ABCC9.

The protein resides in the membrane. The catalysed reaction is K(+)(in) = K(+)(out). Inward rectifier potassium channels are characterized by a greater tendency to allow potassium to flow into the cell rather than out of it. Their voltage dependence is regulated by the concentration of extracellular potassium; as external potassium is raised, the voltage range of the channel opening shifts to more positive voltages. The inward rectification is mainly due to the blockage of outward current by internal magnesium. This channel is activated by internal ATP and can be blocked by external barium. Can form a sulfonylurea-sensitive but ATP-insensitive potassium channel with ABCC9. This Mus musculus (Mouse) protein is ATP-sensitive inward rectifier potassium channel 8 (Kcnj8).